The sequence spans 277 residues: MSVPTVLERIIARKFQEVAERSARVSLAELEALAKAADAPRGFANALIEQAKRKQPAVIAEIKKASPSKGVIREHFVPAEIAVSYEKGGATCLSVLTDVDYFQGADVYLQQARAAVSLPVIRKDFMVDPYQIVEARALGADCVLLIVSALDDVKMAELAATAKDVGLDVLVEVHDGDELERALKTLDTPLVGVNNRNLHTFEVSLETTLDLLPRIPRDRLAITESGILNRADVELMAINEVYSFLVGEAFMRAEQPGLELQRLFFPEQVKKTVQPLD.

The protein belongs to the TrpC family.

The catalysed reaction is 1-(2-carboxyphenylamino)-1-deoxy-D-ribulose 5-phosphate + H(+) = (1S,2R)-1-C-(indol-3-yl)glycerol 3-phosphate + CO2 + H2O. It functions in the pathway amino-acid biosynthesis; L-tryptophan biosynthesis; L-tryptophan from chorismate: step 4/5. The sequence is that of Indole-3-glycerol phosphate synthase from Pseudomonas putida (strain GB-1).